A 329-amino-acid polypeptide reads, in one-letter code: Deoxynucleotidyltransferase terminal-interacting protein 1 (329 aa).

A disordered region spans residues M1–G27. Positions G12–E22 are enriched in gly residues. Positions M56 to K147 are important for dimerization. The a.T hook DNA-binding region spans R159–G173. Position 161 is a phosphoserine (S161). The Nuclear localization signal motif lies at P164 to R170. The segment at R197–T316 is important for DNA and nucleosome binding. The H-T-H motif DNA-binding region spans G216–P237.

In terms of assembly, monomer and homodimer. A minor proportion may form homotrimers. Interacts with ZNF541. Interacts with the terminal deoxynucleotidyltransferase DNTT. Interacts with TRERF1. Identified in a histone deacetylase complex that contains DNTTIP1, HDAC1 and MIDEAS; this complex assembles into a tetramer that contains four copies of each protein chain. Component of a histone deacetylase complex containing DNTTIP1, ZNF541, HDAC1 and HDAC2. Identified in a complex with KCTD19, HDAC1, HDAC2 and ZNF541.

The protein resides in the nucleus. Functionally, increases DNTT terminal deoxynucleotidyltransferase activity (in vitro). Also acts as a transcriptional regulator, binding to the consensus sequence 5'-GNTGCATG-3' following an AT-tract. Associates with RAB20 promoter and positively regulates its transcription. Binds DNA and nucleosomes; may recruit HDAC1 complexes to nucleosomes or naked DNA. The sequence is that of Deoxynucleotidyltransferase terminal-interacting protein 1 (DNTTIP1) from Bos taurus (Bovine).